We begin with the raw amino-acid sequence, 472 residues long: Coronin-6 (472 aa).

WD repeat units lie at residues 23 to 64, 72 to 111, 122 to 161, 165 to 204, 210 to 251, and 256 to 296; these read QAYE…VLPL, KNYP…VWQI, EPII…IWNV, EVLL…IIDP, VAEQ…LWDP, and EPVA…YFEI. Residues 407–433 are disordered; sequence KRNILDVRPPSGPRRSQSASDAPLSQQ. Polar residues predominate over residues 420-433; the sequence is RRSQSASDAPLSQQ. A coiled-coil region spans residues 430–464; it reads LSQQHTLETLLEEIKALRERVQAQEQRITALENML.

In Homo sapiens (Human), this protein is Coronin-6 (CORO6).